A 371-amino-acid polypeptide reads, in one-letter code: D-erythrose-4-phosphate dehydrogenase (371 aa).

12-13 (RI) provides a ligand contact to NAD(+). Substrate is bound by residues 154–156 (SCT), R200, 213–214 (TK), and R236. The Nucleophile role is filled by C155. N318 contacts NAD(+).

The protein belongs to the glyceraldehyde-3-phosphate dehydrogenase family. Epd subfamily. Homotetramer.

It localises to the cytoplasm. It catalyses the reaction D-erythrose 4-phosphate + NAD(+) + H2O = 4-phospho-D-erythronate + NADH + 2 H(+). Its pathway is cofactor biosynthesis; pyridoxine 5'-phosphate biosynthesis; pyridoxine 5'-phosphate from D-erythrose 4-phosphate: step 1/5. Its function is as follows. Catalyzes the NAD-dependent conversion of D-erythrose 4-phosphate to 4-phosphoerythronate. The polypeptide is D-erythrose-4-phosphate dehydrogenase (Psychromonas ingrahamii (strain DSM 17664 / CCUG 51855 / 37)).